Consider the following 613-residue polypeptide: Ectonucleoside triphosphate diphosphohydrolase 4 (613 aa).

Over 1 to 33 (MGRIGISCLFPASWHFSISPVGCPRILNTNLRQ) the chain is Cytoplasmic. Residues 34–54 (IVVISILAAAVSLLYFSVVII) traverse the membrane as a helical segment. Residues 55–559 (RSKYGWLSKD…AGHAHWRGVS (505 aa)) are Lumenal-facing. The active-site Proton acceptor is the glutamate 222. A disulfide bridge links cysteine 368 with cysteine 395. Residues asparagine 404 and asparagine 407 are each glycosylated (N-linked (GlcNAc...) asparagine). Cysteine 461 and cysteine 490 are disulfide-bonded. Residues 560 to 580 (FVYNHYLFSGCFLVVLLSILL) traverse the membrane as a helical segment. At 581 to 613 (YLLRLRRIHRRAPRTGSLWMEEGLPSQKGPGPL) the chain is on the cytoplasmic side.

The protein belongs to the GDA1/CD39 NTPase family. It depends on Ca(2+) as a cofactor. The cofactor is Mg(2+). In terms of tissue distribution, ubiquitous.

It localises to the cytoplasmic vesicle. The protein localises to the autophagosome membrane. It is found in the lysosome membrane. Its subcellular location is the golgi apparatus membrane. The enzyme catalyses a ribonucleoside 5'-triphosphate + H2O = a ribonucleoside 5'-diphosphate + phosphate + H(+). It catalyses the reaction a ribonucleoside 5'-diphosphate + H2O = a ribonucleoside 5'-phosphate + phosphate + H(+). The catalysed reaction is UDP + H2O = UMP + phosphate + H(+). It carries out the reaction UTP + H2O = UDP + phosphate + H(+). The enzyme catalyses CTP + H2O = CDP + phosphate + H(+). It catalyses the reaction GDP + H2O = GMP + phosphate + H(+). The catalysed reaction is 5-methyl-UTP + H2O = 5-methyl-UDP + phosphate + H(+). Its function is as follows. Catalyzes the hydrolysis of nucleoside triphosphates and diphosphates in a calcium- or magnesium-dependent manner, with a preference for pyrimidines. Preferentially hydrolyzes UTP and TTP on UTP and TTP. AMP, ADP, ATP and UMP are not substrates. Preferentially activated by Ca(2+) over Mg(2+). In terms of biological role, has a broad substrate specificity with the ability of cleaving all nucleotide di- and triphosphates with the exception of adenosine di- and triphosphate (ADP and ATP). Preferentially hydrolyzes CTP, UDP, CDP, GTP and GDP. Can use either Ca(2+) or Mg(2+) equally. The protein is Ectonucleoside triphosphate diphosphohydrolase 4 (Entpd4) of Mus musculus (Mouse).